Reading from the N-terminus, the 502-residue chain is L-arabinose isomerase (502 aa).

The Mn(2+) site is built by Glu-307, Glu-334, His-351, and His-450.

Belongs to the arabinose isomerase family. The cofactor is Mn(2+).

The catalysed reaction is beta-L-arabinopyranose = L-ribulose. Its pathway is carbohydrate degradation; L-arabinose degradation via L-ribulose; D-xylulose 5-phosphate from L-arabinose (bacterial route): step 1/3. Functionally, catalyzes the conversion of L-arabinose to L-ribulose. This Nocardioides sp. (strain ATCC BAA-499 / JS614) protein is L-arabinose isomerase.